A 164-amino-acid polypeptide reads, in one-letter code: Protein SprT (164 aa).

The region spanning 14–156 is the SprT-like domain; the sequence is QQAETFFKRP…LCRRCREILV (143 aa). Residue H69 coordinates Zn(2+). The active site involves E70. Residue H73 coordinates Zn(2+).

Belongs to the SprT family. The cofactor is Zn(2+).

It is found in the cytoplasm. The chain is Protein SprT from Pseudomonas entomophila (strain L48).